Reading from the N-terminus, the 325-residue chain is Elongation factor P--(R)-beta-lysine ligase (325 aa).

76–78 lines the substrate pocket; that stretch reads SPE. Residues 100–102 and asparagine 109 each bind ATP; that span reads RNE. Substrate is bound at residue tyrosine 118. 244 to 245 is a binding site for ATP; it reads EL. Glutamate 251 contributes to the substrate binding site. Residue glycine 300 participates in ATP binding.

The protein belongs to the class-II aminoacyl-tRNA synthetase family. EpmA subfamily. As to quaternary structure, homodimer.

The catalysed reaction is D-beta-lysine + L-lysyl-[protein] + ATP = N(6)-((3R)-3,6-diaminohexanoyl)-L-lysyl-[protein] + AMP + diphosphate + H(+). Functionally, with EpmB is involved in the beta-lysylation step of the post-translational modification of translation elongation factor P (EF-P). Catalyzes the ATP-dependent activation of (R)-beta-lysine produced by EpmB, forming a lysyl-adenylate, from which the beta-lysyl moiety is then transferred to the epsilon-amino group of a conserved specific lysine residue in EF-P. This is Elongation factor P--(R)-beta-lysine ligase from Pectobacterium atrosepticum (strain SCRI 1043 / ATCC BAA-672) (Erwinia carotovora subsp. atroseptica).